The following is a 1255-amino-acid chain: Kinesin-related protein 7 (1255 aa).

Residues 1–26 (MESPVVEGNSGEVATPTLPQPPTPVS) form a disordered region. Residues 28–349 (NIRVVCRVRP…LQFGTRAKTI (322 aa)) enclose the Kinesin motor domain. 107–114 (GQTASGKT) is an ATP binding site. 3 stretches are compositionally biased toward low complexity: residues 454–491 (NNNN…QQEN), 545–563 (NNNN…DSDG), and 583–603 (HNIN…NSNS). Disordered stretches follow at residues 454-503 (NNNN…NSSF), 530-564 (GNIS…SDGY), 579-628 (DLND…MDVN), 661-686 (ENEQ…SNAT), 795-864 (EEGS…TKSI), and 915-934 (ISIK…TSIK). The span at 608-628 (VSTSYITSSPNLSPSKSMDVN) shows a compositional bias: polar residues. Residues 813-834 (GDDDDEENEDNENEDVIVDSDE) are compositionally biased toward acidic residues. Residues 915-932 (ISIKSNKEPSPSSSTTTS) are compositionally biased toward low complexity. The chain crosses the membrane as a helical span at residues 945–965 (IIFTIILTITLVSSSLLCLYL). Positions 1088 to 1223 (NYITKIDQLS…QELEDAPIAL (136 aa)) form a coiled coil.

The protein belongs to the TRAFAC class myosin-kinesin ATPase superfamily. Kinesin family.

Its subcellular location is the nucleus membrane. It localises to the cytoplasm. The protein resides in the cytoskeleton. In terms of biological role, microtubule-associated force-producing protein that plays a role in organelle transport. Its motor activity is directed toward the microtubule's plus end. May be involved in cell motility or cell differentiation during prestalk formation. This is Kinesin-related protein 7 (kif7) from Dictyostelium discoideum (Social amoeba).